Reading from the N-terminus, the 177-residue chain is SPbeta prophage-derived uncharacterized protein YopI (177 aa).

Residues 11–31 (FEGIIGALLGVIVTLILTHIL) traverse the membrane as a helical segment.

The protein localises to the cell membrane. This chain is SPbeta prophage-derived uncharacterized protein YopI (yopI), found in Bacillus subtilis (strain 168).